Here is a 448-residue protein sequence, read N- to C-terminus: Phosphoglucosamine mutase (448 aa).

S100 serves as the catalytic Phosphoserine intermediate. The Mg(2+) site is built by S100, D240, D242, and D244. S100 carries the phosphoserine modification.

The protein belongs to the phosphohexose mutase family. Mg(2+) serves as cofactor. In terms of processing, activated by phosphorylation.

The enzyme catalyses alpha-D-glucosamine 1-phosphate = D-glucosamine 6-phosphate. Its function is as follows. Catalyzes the conversion of glucosamine-6-phosphate to glucosamine-1-phosphate. This chain is Phosphoglucosamine mutase, found in Clostridium perfringens (strain ATCC 13124 / DSM 756 / JCM 1290 / NCIMB 6125 / NCTC 8237 / Type A).